The sequence spans 257 residues: Imidazole glycerol phosphate synthase subunit HisF (257 aa).

Catalysis depends on residues D11 and D130.

The protein belongs to the HisA/HisF family. In terms of assembly, heterodimer of HisH and HisF.

The protein localises to the cytoplasm. It catalyses the reaction 5-[(5-phospho-1-deoxy-D-ribulos-1-ylimino)methylamino]-1-(5-phospho-beta-D-ribosyl)imidazole-4-carboxamide + L-glutamine = D-erythro-1-(imidazol-4-yl)glycerol 3-phosphate + 5-amino-1-(5-phospho-beta-D-ribosyl)imidazole-4-carboxamide + L-glutamate + H(+). It participates in amino-acid biosynthesis; L-histidine biosynthesis; L-histidine from 5-phospho-alpha-D-ribose 1-diphosphate: step 5/9. In terms of biological role, IGPS catalyzes the conversion of PRFAR and glutamine to IGP, AICAR and glutamate. The HisF subunit catalyzes the cyclization activity that produces IGP and AICAR from PRFAR using the ammonia provided by the HisH subunit. The protein is Imidazole glycerol phosphate synthase subunit HisF of Pseudoalteromonas translucida (strain TAC 125).